The sequence spans 267 residues: Cilia- and flagella-associated protein 300 (267 aa).

It belongs to the CFAP300 family. As to quaternary structure, interacts with DNAAF2. Expressed in nasal epithelial cells.

The protein resides in the cytoplasm. The protein localises to the cytoskeleton. It localises to the cilium axoneme. Cilium- and flagellum-specific protein that plays a role in axonemal structure organization and motility. May play a role in outer and inner dynein arm assembly. This is Cilia- and flagella-associated protein 300 from Homo sapiens (Human).